Reading from the N-terminus, the 543-residue chain is Zinc finger protein egl-43 (543 aa).

Residues 2-62 (SIDTDFLTSV…NLIKEADDGE (61 aa)) form a positive regulatory (PR) domain region. C2H2-type zinc fingers lie at residues 159–181 (HKCG…SHIH) and 187–209 (FRCH…RRVH). The C2H2-type 3; atypical zinc finger occupies 213–233 (WTCPTCQSQMPSQAALTKHRP). Positions 299–380 (PDAECSSGHA…TSTKKRPTSH (82 aa)) are disordered. The span at 306 to 317 (GHASESSPTTTE) shows a compositional bias: polar residues. A compositionally biased stretch (basic and acidic residues) spans 335 to 348 (TTSKSDDGEDRDSI). 2 consecutive C2H2-type zinc fingers follow at residues 444–466 (YTCK…LRTH) and 472–495 (YKCQ…RNIH). The disordered stretch occupies residues 496–543 (NKPNTSLTPHNHHRQRSLHNSTSTSTTTTTVHHPLLHLPGTSVPVPKV). Residues 513 to 533 (LHNSTSTSTTTTTVHHPLLHL) show a composition bias toward low complexity.

The protein resides in the nucleus. Its function is as follows. Probable transcription factor, required for migration of the hermaphrodite-specific motor neurons (HSNs) from the tail to the gonad primordium during HSN cell differentiation. Required for phasmid neuron development. Required to specify the pi-cell fate of ventral uterine precursor cell (VU) cells. Probable transcription factor, involved in lin-12 (Notch)-dependent anchor cell (AC) and ventral uterine (VU) precursor cell fate specification and in AC invasion. Prevents AC proliferation after AC cell specification by repressing lin-12 expression. May form a positive feedback loop, together with the transcription factor fos-1, that maintains mutual high levels of expression and so activates AC invasion. In terms of biological role, dispensable for anchor cell (AC) invasion and for preventing AC proliferation. This Caenorhabditis elegans protein is Zinc finger protein egl-43.